A 565-amino-acid polypeptide reads, in one-letter code: Sulfite reductase [NADPH] hemoprotein beta-component (565 aa).

4 residues coordinate [4Fe-4S] cluster: cysteine 429, cysteine 435, cysteine 474, and cysteine 478. Cysteine 478 lines the siroheme pocket.

It belongs to the nitrite and sulfite reductase 4Fe-4S domain family. In terms of assembly, alpha(8)-beta(8). The alpha component is a flavoprotein, the beta component is a hemoprotein. Siroheme serves as cofactor. The cofactor is [4Fe-4S] cluster.

The catalysed reaction is hydrogen sulfide + 3 NADP(+) + 3 H2O = sulfite + 3 NADPH + 4 H(+). It functions in the pathway sulfur metabolism; hydrogen sulfide biosynthesis; hydrogen sulfide from sulfite (NADPH route): step 1/1. Functionally, component of the sulfite reductase complex that catalyzes the 6-electron reduction of sulfite to sulfide. This is one of several activities required for the biosynthesis of L-cysteine from sulfate. The chain is Sulfite reductase [NADPH] hemoprotein beta-component from Shewanella piezotolerans (strain WP3 / JCM 13877).